Consider the following 296-residue polypeptide: Small ribosomal subunit protein uS2 (296 aa).

The segment at 252–296 (TSSKTVSKLKQSKKLSKTQNIDEETNTEFDQALGGACENNNSDNT) is disordered.

Belongs to the universal ribosomal protein uS2 family.

In Rickettsia prowazekii (strain Madrid E), this protein is Small ribosomal subunit protein uS2 (rpsB).